Here is a 382-residue protein sequence, read N- to C-terminus: ATP phosphoribosyltransferase regulatory subunit (382 aa).

The protein belongs to the class-II aminoacyl-tRNA synthetase family. HisZ subfamily. In terms of assembly, heteromultimer composed of HisG and HisZ subunits.

The protein localises to the cytoplasm. It functions in the pathway amino-acid biosynthesis; L-histidine biosynthesis; L-histidine from 5-phospho-alpha-D-ribose 1-diphosphate: step 1/9. Its function is as follows. Required for the first step of histidine biosynthesis. May allow the feedback regulation of ATP phosphoribosyltransferase activity by histidine. This is ATP phosphoribosyltransferase regulatory subunit from Acidovorax ebreus (strain TPSY) (Diaphorobacter sp. (strain TPSY)).